Consider the following 280-residue polypeptide: Succinate dehydrogenase [ubiquinone] iron-sulfur subunit 2, mitochondrial (280 aa).

The N-terminal 28 residues, 1 to 28, are a transit peptide targeting the mitochondrion; sequence MAFGLIGRVVGTKSSRLSTAARLIPARW. Residues 51–140 enclose the 2Fe-2S ferredoxin-type domain; the sequence is FQIYRWNPDN…ETTITPLPHM (90 aa). Residues Cys-101, Cys-106, and Cys-121 each contribute to the [2Fe-2S] cluster site. The region spanning 183-213 is the 4Fe-4S ferredoxin-type domain; that stretch reads DRAKLDGMYECILCACCSTSCPSYWWNPESY. Positions 193, 196, and 199 each coordinate [4Fe-4S] cluster. [3Fe-4S] cluster is bound at residue Cys-203. Residue Trp-208 participates in a ubiquinone binding. [3Fe-4S] cluster contacts are provided by Cys-250 and Cys-256. [4Fe-4S] cluster is bound at residue Cys-260.

The protein belongs to the succinate dehydrogenase/fumarate reductase iron-sulfur protein family. In terms of assembly, component of complex II composed of eight subunits in plants: four classical SDH subunits SDH1, SDH2, SDH3 and SDH4 (a flavoprotein (FP), an iron-sulfur protein (IP), and a cytochrome b composed of a large and a small subunit.), as well as four subunits unknown in mitochondria from bacteria and heterotrophic eukaryotes. [2Fe-2S] cluster is required as a cofactor. Requires [3Fe-4S] cluster as cofactor. [4Fe-4S] cluster serves as cofactor. In terms of tissue distribution, ubiquitous. Preferentially expressed in flowers, inflorescences and root tips.

It localises to the mitochondrion inner membrane. The enzyme catalyses a quinone + succinate = fumarate + a quinol. It functions in the pathway carbohydrate metabolism; tricarboxylic acid cycle; fumarate from succinate (eukaryal route): step 1/1. In terms of biological role, iron-sulfur protein (IP) subunit of succinate dehydrogenase (SDH) that is involved in complex II of the mitochondrial electron transport chain and is responsible for transferring electrons from succinate to ubiquinone (coenzyme Q). This is Succinate dehydrogenase [ubiquinone] iron-sulfur subunit 2, mitochondrial (SDH2-2) from Arabidopsis thaliana (Mouse-ear cress).